A 55-amino-acid polypeptide reads, in one-letter code: ATP synthase protein 8 (55 aa).

A helical transmembrane segment spans residues 4-24 (LDPAPWFSMLTVSWLIIFLLI).

The protein belongs to the ATPase protein 8 family. As to quaternary structure, F-type ATPases have 2 components, CF(1) - the catalytic core - and CF(0) - the membrane proton channel.

It localises to the mitochondrion membrane. Its function is as follows. Mitochondrial membrane ATP synthase (F(1)F(0) ATP synthase or Complex V) produces ATP from ADP in the presence of a proton gradient across the membrane which is generated by electron transport complexes of the respiratory chain. F-type ATPases consist of two structural domains, F(1) - containing the extramembraneous catalytic core and F(0) - containing the membrane proton channel, linked together by a central stalk and a peripheral stalk. During catalysis, ATP synthesis in the catalytic domain of F(1) is coupled via a rotary mechanism of the central stalk subunits to proton translocation. Part of the complex F(0) domain. Minor subunit located with subunit a in the membrane. The chain is ATP synthase protein 8 (MT-ATP8) from Petromyzon marinus (Sea lamprey).